We begin with the raw amino-acid sequence, 909 residues long: WD repeat-containing protein 20 homolog (909 aa).

The segment at 58–132 (SPAQGKLGSD…SAGNNTVEAR (75 aa)) is disordered. Low complexity-rich tracts occupy residues 80–107 (GANT…AISN) and 115–127 (SHSN…AGNN). 4 WD repeats span residues 248-288 (IDKT…AATA), 321-362 (TDNC…GIAR), 363-402 (SYFG…VVAR), and 470-517 (ADRN…LRHP). Disordered stretches follow at residues 458–483 (FEGF…FRSD), 554–628 (SGQA…AGSV), 661–699 (SDSI…NSGS), 720–739 (SEKK…RQHR), and 749–775 (NQHN…GHSS). Composition is skewed to polar residues over residues 555-569 (GQAT…SCSP) and 595-606 (TANCTISSQSSP). 2 stretches are compositionally biased toward low complexity: residues 612 to 628 (EAAT…AGSV) and 673 to 699 (GQRP…NSGS). The WD 5 repeat unit spans residues 856-893 (IAHERLTALIFREDCFLTACQDGFIYTWARPGHATHAT).

As to quaternary structure, component of the Usp12-46 deubiquitylase complex consisting of Usp12-46, Wdr20 and Uaf1; regulatory subunit that, together with Uaf1, stabilizes Usp12-46. The Usp12-46 deubiquitylase complex associates with arr/arrow; the interaction leads to deubiquitination and stabilization of arr/arrow.

Regulatory component of the Usp12-46 deubiquitylase complex. This complex deubiquitylates the wg/wingless-signaling receptor arr/arrow, which stabilizes the receptor and increases its concentration at the cell surface; this enhances the sensitivity of cells to wg/wingless-signal stimulation. This increases the amplitude and spatial range of the signaling response to the wg/wingless morphogen gradient, facilitating the precise concentration-dependent regulation of its target genes. Required for wg/wingless-mediated signaling in the wing imaginal disc and for wg/wingless-dependent regulation of intestinal stem cell proliferation. This is WD repeat-containing protein 20 homolog from Drosophila melanogaster (Fruit fly).